The sequence spans 763 residues: Translation initiation factor IF-2 (763 aa).

The disordered stretch occupies residues 52–178 (KQKKVQTSQN…KDEAIKHETK (127 aa)). The span at 65-82 (SNDENKKITNKNTEKTTE) shows a compositional bias: basic and acidic residues. Residues 86-96 (TVDSNKQNNSN) are compositionally biased toward polar residues. 2 stretches are compositionally biased toward basic and acidic residues: residues 105-116 (RNNDEESVSHFD) and 123-135 (KSEM…LNDK). Residues 136 to 145 (KKNKNFKNTK) show a composition bias toward basic residues. The span at 146-161 (NKNSNNNKNSKNNKNN) shows a compositional bias: low complexity. Positions 162-178 (KNNDHNRKDEAIKHETK) are enriched in basic and acidic residues. The tr-type G domain occupies 265 to 434 (ERPPVITVMG…LMVAEMEELK (170 aa)). Positions 274–281 (GHVDHGKT) are G1. 274–281 (GHVDHGKT) provides a ligand contact to GTP. Residues 299–303 (GITQH) form a G2 region. The interval 320–323 (DTPG) is G3. GTP contacts are provided by residues 320–324 (DTPGH) and 374–377 (NKID). The interval 374–377 (NKID) is G4. Positions 410–412 (SAR) are G5.

The protein belongs to the TRAFAC class translation factor GTPase superfamily. Classic translation factor GTPase family. IF-2 subfamily.

It localises to the cytoplasm. Its function is as follows. One of the essential components for the initiation of protein synthesis. Protects formylmethionyl-tRNA from spontaneous hydrolysis and promotes its binding to the 30S ribosomal subunits. Also involved in the hydrolysis of GTP during the formation of the 70S ribosomal complex. The sequence is that of Translation initiation factor IF-2 from Finegoldia magna (strain ATCC 29328 / DSM 20472 / WAL 2508) (Peptostreptococcus magnus).